The chain runs to 248 residues: mRNA-decapping protein OPG122 (248 aa).

Residues 45–227 (HKRVSVSAIL…IAKYALDTAK (183 aa)) form the Nudix hydrolase domain. The Nudix box motif lies at 125-147 (GGIPKRGENVPECLSREIKEEVN).

The protein belongs to the Nudix hydrolase family. As to quaternary structure, interacts with the late transcription elongation factor VLTF-4/OPG110. Interacts with the late transcription factors VLTF-1. The cofactor is Mg(2+). It depends on Mn(2+) as a cofactor.

It localises to the host mitochondrion. Acts with RNA polymerase to initiate transcription from late gene promoters. The protein is mRNA-decapping protein OPG122 (OPG122) of Cynomys gunnisoni (Gunnison's prairie dog).